A 158-amino-acid polypeptide reads, in one-letter code: Transcription factor bHLH146 (158 aa).

Low complexity predominate over residues 77–90; the sequence is SSSSNPTTTTSSSS. A disordered region spans residues 77 to 110; sequence SSSSNPTTTTSSSSDGIRILERPDKEGGNEEGGI. Over residues 94-110 the composition is skewed to basic and acidic residues; the sequence is RILERPDKEGGNEEGGI. The bHLH; atypical domain occupies 94 to 143; that stretch reads RILERPDKEGGNEEGGIEERLRELKKLLPGGEEMNVEEMLSEIGNYIKCL.

This sequence belongs to the bHLH protein family.

It localises to the nucleus. This chain is Transcription factor bHLH146 (BHLH146), found in Arabidopsis thaliana (Mouse-ear cress).